The following is a 431-amino-acid chain: Glutamate-1-semialdehyde 2,1-aminomutase (431 aa).

N6-(pyridoxal phosphate)lysine is present on Lys-269.

This sequence belongs to the class-III pyridoxal-phosphate-dependent aminotransferase family. HemL subfamily. As to quaternary structure, homodimer. Pyridoxal 5'-phosphate serves as cofactor.

Its subcellular location is the cytoplasm. It carries out the reaction (S)-4-amino-5-oxopentanoate = 5-aminolevulinate. Its pathway is porphyrin-containing compound metabolism; protoporphyrin-IX biosynthesis; 5-aminolevulinate from L-glutamyl-tRNA(Glu): step 2/2. It participates in porphyrin-containing compound metabolism; chlorophyll biosynthesis. The polypeptide is Glutamate-1-semialdehyde 2,1-aminomutase (Chlorobium chlorochromatii (strain CaD3)).